The chain runs to 159 residues: UPF0262 protein CCNA_02430 (159 aa).

It belongs to the UPF0262 family.

This Caulobacter vibrioides (strain NA1000 / CB15N) (Caulobacter crescentus) protein is UPF0262 protein CCNA_02430.